Here is a 387-residue protein sequence, read N- to C-terminus: Phosphoglycerate kinase (387 aa).

Substrate is bound by residues 21–23 (DLN), Arg36, 59–62 (HLGR), Arg113, and Arg146. ATP-binding positions include Lys197, Glu314, and 340–343 (GGDT).

This sequence belongs to the phosphoglycerate kinase family. As to quaternary structure, monomer.

It localises to the cytoplasm. It carries out the reaction (2R)-3-phosphoglycerate + ATP = (2R)-3-phospho-glyceroyl phosphate + ADP. It participates in carbohydrate degradation; glycolysis; pyruvate from D-glyceraldehyde 3-phosphate: step 2/5. This is Phosphoglycerate kinase from Aliivibrio salmonicida (strain LFI1238) (Vibrio salmonicida (strain LFI1238)).